Here is a 131-residue protein sequence, read N- to C-terminus: Small ribosomal subunit protein uS11 (131 aa).

Belongs to the universal ribosomal protein uS11 family. In terms of assembly, part of the 30S ribosomal subunit. Interacts with proteins S7 and S18. Binds to IF-3.

Located on the platform of the 30S subunit, it bridges several disparate RNA helices of the 16S rRNA. Forms part of the Shine-Dalgarno cleft in the 70S ribosome. The chain is Small ribosomal subunit protein uS11 from Wigglesworthia glossinidia brevipalpis.